The sequence spans 184 residues: Large ribosomal subunit protein uL6 (184 aa).

Belongs to the universal ribosomal protein uL6 family. As to quaternary structure, part of the 50S ribosomal subunit.

This protein binds to the 23S rRNA, and is important in its secondary structure. It is located near the subunit interface in the base of the L7/L12 stalk, and near the tRNA binding site of the peptidyltransferase center. This Thermococcus gammatolerans (strain DSM 15229 / JCM 11827 / EJ3) protein is Large ribosomal subunit protein uL6.